A 248-amino-acid polypeptide reads, in one-letter code: Transcription factor MYB1 (248 aa).

HTH myb-type domains are found at residues 9-61 (KEGM…LNYL) and 62-116 (RPGI…GRRV). 2 consecutive DNA-binding regions (H-T-H motif) follow at residues 37–61 (WRSL…LNYL) and 89–112 (WSLI…NTNL). The disordered stretch occupies residues 118–144 (DQSHQHCRPNPTITSTKPADAPPANAN).

The protein resides in the nucleus. Its function is as follows. Transcription activator involved in the spatiotemporal regulation of flavonoid biosynthesis specifically in the corms of Montbretia. Activates the promoters of enzymes involved in the biosynthesis of the flavonol kaempferol and the flavonol-glycoside kaempferol-rhamnoside. This is Transcription factor MYB1 from Crocosmia x crocosmiiflora (Montbretia).